A 536-amino-acid polypeptide reads, in one-letter code: Copine-1 (536 aa).

C2 domains follow at residues 1–113 (MAHC…TLPL) and 122–244 (GRGT…ECIH). Ca(2+) contacts are provided by D21, D27, D79, D81, D91, D152, and D158. K170 is subject to N6-acetyllysine. The Ca(2+) site is built by D213, D215, and D221. Residues 282–484 (QINFTVGVDF…AARDIVQFVP (203 aa)) enclose the VWFA domain.

It belongs to the copine family. As to quaternary structure, homodimer; homodimerizes via its C2 domains. Interacts with p65/RELA (via N-terminus); this interaction induces proteolytic cleavage of p65/RELA subunit and inhibition of NF-kappa-B transcriptional activity. Interacts (via VWFA domain) with ACTB, CCDC22, MYCBP2, PPP5C, RDX and UBE2O. Requires Ca(2+) as cofactor. Expressed in liver, brain, heart, intestine, kidney and lung (at protein level).

It localises to the nucleus. The protein resides in the cytoplasm. It is found in the cell membrane. Its function is as follows. Calcium-dependent phospholipid-binding protein that plays a role in calcium-mediated intracellular processes. Involved in the TNF-alpha receptor signaling pathway in a calcium-dependent manner. Exhibits calcium-dependent phospholipid binding properties. Plays a role in neuronal progenitor cell differentiation; induces neurite outgrowth via a AKT-dependent signaling cascade and calcium-independent manner. May recruit target proteins to the cell membrane in a calcium-dependent manner. May function in membrane trafficking. Involved in TNF-alpha-induced NF-kappa-B transcriptional repression by inducing endoprotease processing of the transcription factor NF-kappa-B p65/RELA subunit. Also induces endoprotease processing of NF-kappa-B p50/NFKB1, p52/NFKB2, RELB and REL. This chain is Copine-1, found in Rattus norvegicus (Rat).